Consider the following 234-residue polypeptide: N-(5'-phosphoribosyl)anthranilate isomerase 1 (234 aa).

Belongs to the TrpF family.

It carries out the reaction N-(5-phospho-beta-D-ribosyl)anthranilate = 1-(2-carboxyphenylamino)-1-deoxy-D-ribulose 5-phosphate. Its pathway is amino-acid biosynthesis; L-tryptophan biosynthesis; L-tryptophan from chorismate: step 3/5. In Methanosarcina mazei (strain ATCC BAA-159 / DSM 3647 / Goe1 / Go1 / JCM 11833 / OCM 88) (Methanosarcina frisia), this protein is N-(5'-phosphoribosyl)anthranilate isomerase 1 (trpF1).